An 863-amino-acid chain; its full sequence is Scm-like with four MBT domains protein 1 (863 aa).

MBT repeat units follow at residues 20 to 120, 128 to 232, 242 to 346, and 354 to 451; these read FSWE…LEAP, SDWN…LQPP, ADWQ…INPP, and FDWA…LSTP. The interval 638–773 is disordered; it reads KKKNKRIGRP…SDDENKPPSP (136 aa). Over residues 660-679 the composition is skewed to basic residues; the sequence is KSSKRRKRRKNIFVHKKKRS. Polar residues predominate over residues 680-691; the sequence is SASVDNTPVGSP. 2 stretches are compositionally biased toward acidic residues: residues 696-710 and 718-727; these read GEDE…EDSL and QQEELQEESE. Residues 734 to 744 are compositionally biased toward low complexity; the sequence is SSSSPTQSETP. Residues S764 and S772 each carry the phosphoserine modification. Residues 793-861 form the SAM domain; that stretch reads WSVADVVRFI…RIKFAFYEQF (69 aa).

Interacts with MYOD1. Component of the SLC (SFMBT1-LSD1-CoREST) corepressor complex, which also contains KDM1A/LSD1 and RCOR1/CoREST. Interacts with KDM1A/LSD1 and RCOR1/CoREST. Interacts with MYOD1. Interacts with L3MBTL3. Highly expressed in the testis, low expression is detected in brain, kidney, heart and lung. Highly expressed in germ cells, where it associates with the synaptic regions of meiotic chromosomes in pachytene stage spermatocytes.

It localises to the nucleus. Functionally, histone-binding protein, which is part of various corepressor complexes. Mediates the recruitment of corepressor complexes to target genes, followed by chromatin compaction and repression of transcription. Plays a role during myogenesis: required for the maintenance of undifferentiated states of myogenic progenitor cells via interaction with MYOD1. Interaction with MYOD1 leads to the recruitment of associated corepressors and silencing of MYOD1 target genes. Part of the SLC complex in germ cells, where it may play a role during spermatogenesis. The chain is Scm-like with four MBT domains protein 1 (Sfmbt1) from Mus musculus (Mouse).